A 334-amino-acid polypeptide reads, in one-letter code: 6-phosphogluconolactonase (334 aa).

The protein belongs to the cycloisomerase 2 family.

The enzyme catalyses 6-phospho-D-glucono-1,5-lactone + H2O = 6-phospho-D-gluconate + H(+). It participates in carbohydrate degradation; pentose phosphate pathway; D-ribulose 5-phosphate from D-glucose 6-phosphate (oxidative stage): step 2/3. Functionally, catalyzes the hydrolysis of 6-phosphogluconolactone to 6-phosphogluconate. In Yersinia pseudotuberculosis serotype O:1b (strain IP 31758), this protein is 6-phosphogluconolactonase.